Reading from the N-terminus, the 56-residue chain is Large ribosomal subunit protein eL37 (56 aa).

Cys19, Cys22, Cys34, and Cys37 together coordinate Zn(2+). The C4-type zinc-finger motif lies at Cys19–Cys37.

Belongs to the eukaryotic ribosomal protein eL37 family. The cofactor is Zn(2+).

Binds to the 23S rRNA. The polypeptide is Large ribosomal subunit protein eL37 (Methanococcoides burtonii (strain DSM 6242 / NBRC 107633 / OCM 468 / ACE-M)).